The primary structure comprises 330 residues: Aspartate--ammonia ligase (330 aa).

This sequence belongs to the class-II aminoacyl-tRNA synthetase family. AsnA subfamily. In terms of assembly, homodimer.

It localises to the cytoplasm. The catalysed reaction is L-aspartate + NH4(+) + ATP = L-asparagine + AMP + diphosphate + H(+). It participates in amino-acid biosynthesis; L-asparagine biosynthesis; L-asparagine from L-aspartate (ammonia route): step 1/1. In Salmonella typhimurium (strain LT2 / SGSC1412 / ATCC 700720), this protein is Aspartate--ammonia ligase.